A 234-amino-acid chain; its full sequence is Glucosamine-6-phosphate deaminase (234 aa).

Aspartate 62 functions as the Proton acceptor; for enolization step in the catalytic mechanism. Asparagine 128 (for ring-opening step) is an active-site residue. Catalysis depends on histidine 130, which acts as the Proton acceptor; for ring-opening step. Glutamate 135 serves as the catalytic For ring-opening step.

This sequence belongs to the glucosamine/galactosamine-6-phosphate isomerase family. NagB subfamily.

The catalysed reaction is alpha-D-glucosamine 6-phosphate + H2O = beta-D-fructose 6-phosphate + NH4(+). It functions in the pathway amino-sugar metabolism; N-acetylneuraminate degradation; D-fructose 6-phosphate from N-acetylneuraminate: step 5/5. In terms of biological role, catalyzes the reversible isomerization-deamination of glucosamine 6-phosphate (GlcN6P) to form fructose 6-phosphate (Fru6P) and ammonium ion. The chain is Glucosamine-6-phosphate deaminase from Lactobacillus delbrueckii subsp. bulgaricus (strain ATCC 11842 / DSM 20081 / BCRC 10696 / JCM 1002 / NBRC 13953 / NCIMB 11778 / NCTC 12712 / WDCM 00102 / Lb 14).